Here is a 371-residue protein sequence, read N- to C-terminus: Bifunctional enzyme IspD/IspF (371 aa).

The 2-C-methyl-D-erythritol 4-phosphate cytidylyltransferase stretch occupies residues M1–I210. Residues F211–L371 are 2-C-methyl-D-erythritol 2,4-cyclodiphosphate synthase. The a divalent metal cation site is built by D217 and H219. 4-CDP-2-C-methyl-D-erythritol 2-phosphate contacts are provided by residues D217–H219 and H243–S244. H251 provides a ligand contact to a divalent metal cation. 4-CDP-2-C-methyl-D-erythritol 2-phosphate contacts are provided by residues D265–G267, Y270–D274, A309–K315, T341–E344, F348, and R351.

This sequence in the N-terminal section; belongs to the IspD/TarI cytidylyltransferase family. IspD subfamily. The protein in the C-terminal section; belongs to the IspF family. A divalent metal cation is required as a cofactor.

It carries out the reaction 2-C-methyl-D-erythritol 4-phosphate + CTP + H(+) = 4-CDP-2-C-methyl-D-erythritol + diphosphate. The enzyme catalyses 4-CDP-2-C-methyl-D-erythritol 2-phosphate = 2-C-methyl-D-erythritol 2,4-cyclic diphosphate + CMP. It participates in isoprenoid biosynthesis; isopentenyl diphosphate biosynthesis via DXP pathway; isopentenyl diphosphate from 1-deoxy-D-xylulose 5-phosphate: step 2/6. Its pathway is isoprenoid biosynthesis; isopentenyl diphosphate biosynthesis via DXP pathway; isopentenyl diphosphate from 1-deoxy-D-xylulose 5-phosphate: step 4/6. In terms of biological role, bifunctional enzyme that catalyzes the formation of 4-diphosphocytidyl-2-C-methyl-D-erythritol from CTP and 2-C-methyl-D-erythritol 4-phosphate (MEP) (IspD), and catalyzes the conversion of 4-diphosphocytidyl-2-C-methyl-D-erythritol 2-phosphate (CDP-ME2P) to 2-C-methyl-D-erythritol 2,4-cyclodiphosphate (ME-CPP) with a corresponding release of cytidine 5-monophosphate (CMP) (IspF). This Campylobacter jejuni subsp. jejuni serotype O:2 (strain ATCC 700819 / NCTC 11168) protein is Bifunctional enzyme IspD/IspF.